The sequence spans 381 residues: Glucose-1-phosphate adenylyltransferase (381 aa).

Residues tyrosine 100, glycine 165, 180–181 (EK), and serine 191 each bind alpha-D-glucose 1-phosphate.

Belongs to the bacterial/plant glucose-1-phosphate adenylyltransferase family. In terms of assembly, homotetramer.

It catalyses the reaction alpha-D-glucose 1-phosphate + ATP + H(+) = ADP-alpha-D-glucose + diphosphate. It participates in glycan biosynthesis; glycogen biosynthesis. Its function is as follows. Involved in the biosynthesis of ADP-glucose, a building block required for the elongation reactions to produce glycogen. Catalyzes the reaction between ATP and alpha-D-glucose 1-phosphate (G1P) to produce pyrophosphate and ADP-Glc. The polypeptide is Glucose-1-phosphate adenylyltransferase (Mycoplasma mobile (strain ATCC 43663 / 163K / NCTC 11711) (Mesomycoplasma mobile)).